We begin with the raw amino-acid sequence, 194 residues long: Lysozyme g-like protein 1 (194 aa).

An N-terminal signal peptide occupies residues 1–19 (MSALWLLLGLLALMDLSES). Disulfide bonds link cysteine 24–cysteine 80 and cysteine 38–cysteine 49.

This sequence belongs to the glycosyl hydrolase 23 family.

It is found in the secreted. This Homo sapiens (Human) protein is Lysozyme g-like protein 1 (LYG1).